The chain runs to 723 residues: F-box protein MAX2 homolog B (723 aa).

The 54-residue stretch at 2–55 (AKTPIPFTTLNDLPDVILSNIIAAVSDTRSRNATALVCHKWLVLERSTRTSLTL) folds into the F-box domain.

In terms of assembly, part of a putative SCF (SKP1/Cullin/F-box) ubiquitin ligase complex. Interacts with KAI2IA in the presence of (-)-germacrene D. Mainly expressed in fully expanded leaves, lateral roots, axillary and shoot apex, and, to a lower extent, in internodes and nodes.

It localises to the nucleus. It is found in the cytoplasm. In terms of biological role, component of SCF(ASK-cullin-F-box) E3 ubiquitin ligase complexes, which may mediate the ubiquitination and subsequent proteasomal degradation of target proteins. Is necessary for responses to strigolactones and may be involved in the ubiquitin-mediated degradation of specific proteins that activate axillary growth. Targets probably SMAX1A to degradation upon the formation of an E3 SCF ubiquitin ligase complex (ASK-cullin-F-box) containing MAX2B and KAI2IA in response to (-)-germacrene D in the stigma. The chain is F-box protein MAX2 homolog B from Petunia hybrida (Petunia).